A 65-amino-acid polypeptide reads, in one-letter code: Sec-independent protein translocase protein TatA (65 aa).

Residues 9–29 (ILIIVLLVVVVFGIGKLPQVG) traverse the membrane as a helical segment. Residues 43 to 65 (SSGEEEKEEVETKEETKTIEKSE) are disordered. Acidic residues predominate over residues 45–54 (GEEEKEEVET). The segment covering 55 to 65 (KEETKTIEKSE) has biased composition (basic and acidic residues).

It belongs to the TatA/E family. As to quaternary structure, forms a complex with TatC.

Its subcellular location is the cell membrane. Functionally, part of the twin-arginine translocation (Tat) system that transports large folded proteins containing a characteristic twin-arginine motif in their signal peptide across membranes. TatA could form the protein-conducting channel of the Tat system. The chain is Sec-independent protein translocase protein TatA from Dehalococcoides mccartyi (strain ATCC BAA-2266 / KCTC 15142 / 195) (Dehalococcoides ethenogenes (strain 195)).